The chain runs to 1218 residues: Cytosolic carboxypeptidase 1 (1218 aa).

2 disordered regions span residues 476-512 and 590-617; these read VVMKERASPKGEEAKEDPKGHDRTLPQQLGGQSRVAP and TEDDEDTESHSSTEQAPSVEASDGPTLH. The segment covering 477 to 499 has biased composition (basic and acidic residues); sequence VMKERASPKGEEAKEDPKGHDRT. Positions 840–1130 constitute a Peptidase M14 domain; it reads YPYTYSTLQM…KFCVGLLRLK (291 aa). 3 residues coordinate Zn(2+): histidine 912, glutamate 915, and histidine 1009. Catalysis depends on glutamate 1094, which acts as the Proton donor/acceptor. Serine 1160 bears the Phosphoserine mark. Positions 1193–1218 are disordered; sequence ENTGDYEPSAQEEALSDSEVSRTHLI.

Belongs to the peptidase M14 family. As to quaternary structure, interacts with MYLK. The cofactor is Zn(2+). In terms of tissue distribution, widely expressed. Highly expressed in the cerebellum and cortex of adult mouse brain. Expressed at similar levels in both the cerebellum and the cortex throughout all developmental stages. Also expressed in sciatic nerve transection, spinal motor neurons undergoing axon regeneration, testis, heart, eye, lung, pancreas, intestine, stomach, pituitary, spleen, adrenal, kidney and in developing brain. Expression in cranial motor nuclei is the same as that observed in uninjured primary motor neurons. Expression is prevalent in sensory neurons and hippocampal CA3 neurons in addition to regenerating motor neurons.

It is found in the cytoplasm. The protein localises to the cytosol. It localises to the nucleus. The protein resides in the mitochondrion. It catalyses the reaction (L-glutamyl)(n+1)-gamma-L-glutamyl-L-glutamyl-[protein] + H2O = (L-glutamyl)(n)-gamma-L-glutamyl-L-glutamyl-[protein] + L-glutamate. The catalysed reaction is C-terminal L-alpha-aminoacyl-L-glutamyl-L-glutamyl-[tubulin] + H2O = C-terminal L-alpha-aminoacyl-L-glutamyl-[tubulin] + L-glutamate. Functionally, metallocarboxypeptidase that mediates protein deglutamylation of tubulin and non-tubulin target proteins. Catalyzes the removal of polyglutamate side chains present on the gamma-carboxyl group of glutamate residues within the C-terminal tail of alpha- and beta-tubulin. Specifically cleaves tubulin long-side-chains, while it is not able to remove the branching point glutamate. Also catalyzes the removal of polyglutamate residues from the carboxy-terminus of alpha-tubulin as well as non-tubulin proteins such as MYLK. Involved in KLF4 deglutamylation which promotes KLF4 proteasome-mediated degradation, thereby negatively regulating cell pluripotency maintenance and embryogenesis. The polypeptide is Cytosolic carboxypeptidase 1 (Mus musculus (Mouse)).